We begin with the raw amino-acid sequence, 81 residues long: Three-finger toxin A1 (81 aa).

The signal sequence occupies residues 1–21 (MKTLLLTLVVVTIVCLDFGHT). Intrachain disulfides connect Cys-24–Cys-43, Cys-38–Cys-60, Cys-62–Cys-73, and Cys-74–Cys-79.

This sequence belongs to the three-finger toxin family. Short-chain subfamily. Type I alpha-neurotoxin sub-subfamily. As to expression, expressed by the venom gland.

It is found in the secreted. Functionally, binds and inhibits fetal (alpha-1-beta-1-gamma-delta/CHRNA1-CHRNB1-CHRNG-CHRND, IC(50)=1.4 nM), adult (alpha-1-beta-1-delta-epsilon/CHRNA1-CHRNB1-CHRND-CHRNE, IC(50)=12 nM) and neuronal alpha-7/CHRNA7 (IC(50)=400 nM) nicotinic acetylcholine receptors (nAChR) thereby impairing neuromuscular and neuronal transmissions. In Micrurus laticollaris (Balsas coral snake), this protein is Three-finger toxin A1.